The following is a 216-amino-acid chain: Superoxide dismutase [Cu-Zn] 2, chloroplastic (216 aa).

The N-terminal 62 residues, 1–62 (MAATNTILAF…APSKALTVVS (62 aa)), are a transit peptide targeting the chloroplast. Residues His108, His110, and His125 each coordinate Cu cation. An intrachain disulfide couples Cys119 to Cys208. Zn(2+) is bound by residues His125, His133, His142, and Asp145. His182 is a Cu cation binding site.

This sequence belongs to the Cu-Zn superoxide dismutase family. As to quaternary structure, homotetramer. Cu cation is required as a cofactor. It depends on Zn(2+) as a cofactor. In terms of tissue distribution, expressed in leaves (at protein level). The spatial localization is regulated by miR398-mediated silencing. Mostly present in flowers, old rosette leaves and inflorescence, and, to a lower extent, in cauline leaves, stems and roots.

The protein localises to the plastid. Its subcellular location is the chloroplast. It carries out the reaction 2 superoxide + 2 H(+) = H2O2 + O2. Its function is as follows. Destroys radicals which are normally produced within the cells and which are toxic to biological systems. Mediates tolerance to stress, including photo-oxidative stress. This is Superoxide dismutase [Cu-Zn] 2, chloroplastic (CSD2) from Arabidopsis thaliana (Mouse-ear cress).